Consider the following 156-residue polypeptide: Small ribosomal subunit protein uS7 (156 aa).

The protein belongs to the universal ribosomal protein uS7 family. In terms of assembly, part of the 30S ribosomal subunit. Contacts proteins S9 and S11.

Its function is as follows. One of the primary rRNA binding proteins, it binds directly to 16S rRNA where it nucleates assembly of the head domain of the 30S subunit. Is located at the subunit interface close to the decoding center, probably blocks exit of the E-site tRNA. The chain is Small ribosomal subunit protein uS7 from Prochlorococcus marinus (strain SARG / CCMP1375 / SS120).